A 1146-amino-acid polypeptide reads, in one-letter code: Nitrogen permease regulator 3 (1146 aa).

Residues 1-25 (MDECLPNSCLLGVHLVISTHSGPQI) form the signal peptide. Position 76 is a phosphoserine (Ser76). Disordered regions lie at residues 90–159 (AITP…LSDS), 177–221 (SSLS…SPQM), 237–340 (SGTN…HHYH), and 440–466 (GRWRKSKHKNKTRSKRSSSTTTNISRK). A compositionally biased stretch (polar residues) spans 105–123 (LPPTRSHANTVGSQSSIPA). Composition is skewed to low complexity over residues 150-159 (ETSSSGLSDS) and 177-196 (SSLSSSSLSSSPSSSSSSSP). Composition is skewed to polar residues over residues 201 to 221 (LSRTNSSFQSTDSMSPTSPQM), 237 to 253 (SGTNNKSRAASKRSQNF), and 277 to 303 (KPSQSTKKGNKLLKNTSNETDGNAFTG). The segment covering 304–315 (SCSISSKKSLSS) has biased composition (low complexity). A compositionally biased stretch (polar residues) spans 323-334 (LRNSSLNDTPGQ). Residues 441–455 (RWRKSKHKNKTRSKR) show a composition bias toward basic residues. 2 positions are modified to phosphoserine: Ser486 and Ser987. Positions 979 to 1047 (KTNTARRPSM…SRVDDRDDNE (69 aa)) are disordered. 2 stretches are compositionally biased toward basic and acidic residues: residues 986 to 1004 (PSMDYKKTDKKLDDEDGQS) and 1025 to 1042 (NNKDVDEKDNENDSRVDD).

The protein belongs to the NPR3 family. As to quaternary structure, component of the SEA complex composed of at least IML1/SEA1, RTC1/SEA2, MTC5/SEA3, NPR2, NPR3, SEA4, SEC13 and SEH1. Forms a heterodimer with NPR2.

It is found in the vacuole membrane. Its function is as follows. Component of the SEA complex which coats the vacuolar membrane and is involved in intracellular trafficking, autophagy, response to nitrogen starvation, and amino acid biogenesis. Mediates inactivation of the TORC1 complex in response to amino acid starvation. Required for meiotic nuclear division. In Saccharomyces cerevisiae (strain ATCC 204508 / S288c) (Baker's yeast), this protein is Nitrogen permease regulator 3 (NPR3).